The primary structure comprises 506 residues: D-alanine--D-alanyl carrier protein ligase (506 aa).

152–153 (TS) contacts ATP. Residue aspartate 197 participates in D-alanine binding. Residue 292-297 (NTYGPT) participates in ATP binding. Valine 301 serves as a coordination point for D-alanine. ATP contacts are provided by residues aspartate 383, 395-398 (YRGR), and lysine 494. Lysine 494 contributes to the D-alanine binding site.

The protein belongs to the ATP-dependent AMP-binding enzyme family. DltA subfamily.

It localises to the cytoplasm. The enzyme catalyses holo-[D-alanyl-carrier protein] + D-alanine + ATP = D-alanyl-[D-alanyl-carrier protein] + AMP + diphosphate. It functions in the pathway cell wall biogenesis; lipoteichoic acid biosynthesis. Functionally, catalyzes the first step in the D-alanylation of lipoteichoic acid (LTA), the activation of D-alanine and its transfer onto the D-alanyl carrier protein (Dcp) DltC. In an ATP-dependent two-step reaction, forms a high energy D-alanyl-AMP intermediate, followed by transfer of the D-alanyl residue as a thiol ester to the phosphopantheinyl prosthetic group of the Dcp. D-alanylation of LTA plays an important role in modulating the properties of the cell wall in Gram-positive bacteria, influencing the net charge of the cell wall. This Lacticaseibacillus paracasei (strain ATCC 334 / BCRC 17002 / CCUG 31169 / CIP 107868 / KCTC 3260 / NRRL B-441) (Lactobacillus paracasei) protein is D-alanine--D-alanyl carrier protein ligase.